Consider the following 564-residue polypeptide: Phenylalanine--tRNA ligase beta subunit (564 aa).

Residues 286-362 (YFQNMLEVNV…IGMGLDSFKP (77 aa)) enclose the B5 domain. Positions 340, 346, 349, and 350 each coordinate Mg(2+).

This sequence belongs to the phenylalanyl-tRNA synthetase beta subunit family. Type 2 subfamily. In terms of assembly, tetramer of two alpha and two beta subunits. Mg(2+) serves as cofactor.

The protein resides in the cytoplasm. The enzyme catalyses tRNA(Phe) + L-phenylalanine + ATP = L-phenylalanyl-tRNA(Phe) + AMP + diphosphate + H(+). This is Phenylalanine--tRNA ligase beta subunit from Borrelia turicatae (strain 91E135).